The primary structure comprises 48 residues: Small polypeptide DEVIL 14 (48 aa).

Residues 4–23 form a helical membrane-spanning segment; that stretch reads TVVLRCCTSVTKVRTWKRCS. The required for DVL/RTFL small polypeptide activity stretch occupies residues 17 to 48; that stretch reads RTWKRCSKQIKEQRARLYIIWKCAVFLLSSHD.

Belongs to the DVL/RTFL small polypeptides family.

Its subcellular location is the cell membrane. Small polypeptide acting as a regulatory molecule which coordinates cellular responses required for differentiation, growth and development, probably by restricting polar cell proliferation in lateral organs and coordinating socket cell recruitment and differentiation at trichome sites. The chain is Small polypeptide DEVIL 14 from Arabidopsis thaliana (Mouse-ear cress).